The chain runs to 191 residues: uncharacterized protein (191 aa).

The N-terminal stretch at 1–23 is a signal peptide; it reads MKKTMSAITAAAAVTSCFTGFGA.

This is an uncharacterized protein from Bacillus subtilis (strain 168).